The primary structure comprises 1345 residues: Rho guanine nucleotide exchange factor 10 (1345 aa).

Disordered stretches follow at residues Met-1–Leu-84 and Thr-99–Leu-120. The span at Asn-22–Pro-39 shows a compositional bias: acidic residues. Positions Glu-40–Gly-54 are enriched in basic and acidic residues. A compositionally biased stretch (polar residues) spans Gln-102 to Ala-111. Ser-157 bears the Phosphoserine mark. Disordered regions lie at residues Val-158–Ala-195 and Met-207–Ser-273. Positions Gln-171 to Gly-191 are enriched in polar residues. A compositionally biased stretch (acidic residues) spans Asp-224 to Glu-239. Low complexity predominate over residues Gly-242–Phe-255. The stretch at Gly-307–Asp-335 forms a coiled coil. Ser-355 carries the post-translational modification Phosphoserine. The DH domain maps to Val-397 to Arg-584. 2 disordered regions span residues Asp-1202–Thr-1237 and Lys-1253–Ser-1306. Residues Leu-1256–Ser-1271 show a composition bias toward low complexity. At Ser-1262 the chain carries Phosphoserine. Gln-1314 is subject to N5-methylglutamine.

Post-translationally, methylated at Gln-1314 by N6AMT1. In terms of tissue distribution, ubiquitously expressed.

Its function is as follows. May play a role in developmental myelination of peripheral nerves. The protein is Rho guanine nucleotide exchange factor 10 (Arhgef10) of Mus musculus (Mouse).